The sequence spans 350 residues: MEKFQAAMVLGAVGDALGSRWQTCSSGSQIQQELRALGGLAALKLDAEHWPLSDGALMHMTTAEALITDYWCLEDLYRELVRLYVEAMVSLQGRVPEPSTVEGCANLKPHNFLLAWHTPFNEKGSGHGAATKAMCIGMRYWQPERLHTLVEVSIEAGRMTHNHPIGFLGSLCTALFASFAVQGRPLVSWGRELLKTLPKAEEYCRKTIRHMAEYQETWFYFEAKWQFYLEERGIEDGQSKPSFPERYDADETDRMYKRWSSEGCAGRRGHDAPMIAYDALLAAGSDWEELCRRAILHGGESSATGLISGCLFGLLHGLSAAPTGLHQDLDRREKLQDLGERLYRAAALEK.

This sequence belongs to the ADP-ribosylglycohydrolase family.

Its subcellular location is the cytoplasm. The protein localises to the myofibril. It localises to the sarcomere. Functionally, required for myofibril assembly and outgrowth of the cardiac chambers in the developing heart. Appears to be catalytically inactive, showing no activity against O-acetyl-ADP-ribose. The sequence is that of Inactive ADP-ribosyltransferase arh2 (adprhl1) from Danio rerio (Zebrafish).